The primary structure comprises 106 residues: MSRSQLWAAVVLLLLLQSAQGVYIKYHGFQVQLESVKKLNELEEKEMSNPQPRRSGLLPAVCHNPALPLDLQPVCASQEAASTFKALRTIATDECELCINVACTGC.

The first 21 residues, 1-21 (MSRSQLWAAVVLLLLLQSAQG), serve as a signal peptide directing secretion. A propeptide spanning residues 22-91 (VYIKYHGFQV…STFKALRTIA (70 aa)) is cleaved from the precursor. Intrachain disulfides connect Cys62/Cys75, Cys95/Cys103, and Cys98/Cys106.

This sequence belongs to the guanylin family. As to expression, localized predominantly in intestinal villi and the corticomedullary junction of the kidney.

It is found in the secreted. Functionally, endogenous activator of intestinal guanylate cyclase. It stimulates this enzyme through the same receptor binding region as the heat-stable enterotoxins. May be a potent physiological regulator of intestinal fluid and electrolyte transport. May be an autocrine/paracrine regulator of intestinal salt and water transport. The protein is Guanylate cyclase activator 2B (Guca2b) of Mus musculus (Mouse).